A 549-amino-acid chain; its full sequence is Putative acyl-CoA synthetase YngI (549 aa).

ATP contacts are provided by residues Thr198–Lys206, Asp423, Arg438, and Lys529.

This sequence belongs to the ATP-dependent AMP-binding enzyme family.

The polypeptide is Putative acyl-CoA synthetase YngI (yngI) (Bacillus subtilis (strain 168)).